Consider the following 186-residue polypeptide: Small ribosomal subunit protein uS5 (186 aa).

The 64-residue stretch at 18–81 (FVDKLVHINR…EAAKRAMIRV (64 aa)) folds into the S5 DRBM domain.

It belongs to the universal ribosomal protein uS5 family. Part of the 30S ribosomal subunit. Contacts proteins S4 and S8.

In terms of biological role, with S4 and S12 plays an important role in translational accuracy. Functionally, located at the back of the 30S subunit body where it stabilizes the conformation of the head with respect to the body. The sequence is that of Small ribosomal subunit protein uS5 from Parvibaculum lavamentivorans (strain DS-1 / DSM 13023 / NCIMB 13966).